The sequence spans 557 residues: uncharacterized protein (557 aa).

Positions 1 to 30 (MAPRRRRHTRIAGLRVVGTATLVAATTLTA) are cleaved as a signal peptide. Cys-31 is lipidated: N-palmitoyl cysteine. Cys-31 carries the S-diacylglycerol cysteine lipid modification.

To M.bovis Mb2616c and M.leprae ML0489.

Its subcellular location is the cell membrane. This is an uncharacterized protein from Mycobacterium tuberculosis (strain CDC 1551 / Oshkosh).